Reading from the N-terminus, the 162-residue chain is Phosphopantetheine adenylyltransferase (162 aa).

Residue S11 coordinates substrate. Residues 11–12 and H19 contribute to the ATP site; that span reads SF. Residues K43, V76, and R90 each coordinate substrate. Residues 91–93, E101, and 126–132 contribute to the ATP site; these read GLR and HLYISSS.

The protein belongs to the bacterial CoaD family. As to quaternary structure, homohexamer. Mg(2+) serves as cofactor.

It localises to the cytoplasm. The enzyme catalyses (R)-4'-phosphopantetheine + ATP + H(+) = 3'-dephospho-CoA + diphosphate. The protein operates within cofactor biosynthesis; coenzyme A biosynthesis; CoA from (R)-pantothenate: step 4/5. In terms of biological role, reversibly transfers an adenylyl group from ATP to 4'-phosphopantetheine, yielding dephospho-CoA (dPCoA) and pyrophosphate. The protein is Phosphopantetheine adenylyltransferase of Streptococcus pneumoniae (strain 70585).